Consider the following 1271-residue polypeptide: Chitin synthase 4 (1271 aa).

Disordered stretches follow at residues 1–45 (MPPT…SFDH) and 58–117 (PNHP…ERPS). Residues 21–30 (APDTQESSPA) are compositionally biased toward polar residues. 2 consecutive transmembrane segments (helical) span residues 165 to 185 (WWIRITWMMTWWIPSFLLVHL) and 201 to 221 (LAIFMMICLACAVVLFYIIFF). N407 carries an N-linked (GlcNAc...) asparagine glycan. Residues 473-493 (LLLAFSIILIATIASKFLAAL) form a helical membrane-spanning segment. Residues N713 and N836 are each glycosylated (N-linked (GlcNAc...) asparagine). The next 3 membrane-spanning stretches (helical) occupy residues 867–887 (LLGTIILPATCGYLIYLVIVV), 894–914 (IPVISLAMIGATYGLQALIFI), and 919–939 (FMLIGWMLVYILAFPVWSVFL). The disordered stretch occupies residues 999–1081 (HSESPAPSEK…DKSFIRGSKP (83 aa)). A compositionally biased stretch (polar residues) spans 1027–1037 (RSPSFHSSASE). 2 N-linked (GlcNAc...) asparagine glycosylation sites follow: N1055 and N1161. Positions 1213–1269 (EVQDEEVLDKLKTWLSKQDLMSVTKRQTREAIYTLFPNAGLQNRAGWLNEQIDKILS) constitute a DEK-C domain.

The protein belongs to the chitin synthase family.

The protein resides in the cell membrane. The enzyme catalyses [(1-&gt;4)-N-acetyl-beta-D-glucosaminyl](n) + UDP-N-acetyl-alpha-D-glucosamine = [(1-&gt;4)-N-acetyl-beta-D-glucosaminyl](n+1) + UDP + H(+). Functionally, polymerizes chitin, a structural polymer of the cell wall and septum, by transferring the sugar moiety of UDP-GlcNAc to the non-reducing end of the growing chitin polymer. Produces a large proportion of the chitin that is not deacetylated to chitosan. This chain is Chitin synthase 4, found in Cryptococcus neoformans var. grubii serotype A (strain H99 / ATCC 208821 / CBS 10515 / FGSC 9487) (Filobasidiella neoformans var. grubii).